A 251-amino-acid polypeptide reads, in one-letter code: 1-(5-phosphoribosyl)-5-[(5-phosphoribosylamino)methylideneamino] imidazole-4-carboxamide isomerase (251 aa).

The Proton acceptor role is filled by Asp8. The active-site Proton donor is the Asp131.

It belongs to the HisA/HisF family.

The protein resides in the cytoplasm. The catalysed reaction is 1-(5-phospho-beta-D-ribosyl)-5-[(5-phospho-beta-D-ribosylamino)methylideneamino]imidazole-4-carboxamide = 5-[(5-phospho-1-deoxy-D-ribulos-1-ylimino)methylamino]-1-(5-phospho-beta-D-ribosyl)imidazole-4-carboxamide. It participates in amino-acid biosynthesis; L-histidine biosynthesis; L-histidine from 5-phospho-alpha-D-ribose 1-diphosphate: step 4/9. This Azoarcus sp. (strain BH72) protein is 1-(5-phosphoribosyl)-5-[(5-phosphoribosylamino)methylideneamino] imidazole-4-carboxamide isomerase.